A 578-amino-acid chain; its full sequence is Sulfite reductase [NADPH] hemoprotein beta-component (578 aa).

The [4Fe-4S] cluster site is built by Cys-441, Cys-447, Cys-487, and Cys-491. Position 491 (Cys-491) interacts with siroheme.

It belongs to the nitrite and sulfite reductase 4Fe-4S domain family. Alpha(8)-beta(8). The alpha component is a flavoprotein, the beta component is a hemoprotein. Siroheme serves as cofactor. The cofactor is [4Fe-4S] cluster.

The catalysed reaction is hydrogen sulfide + 3 NADP(+) + 3 H2O = sulfite + 3 NADPH + 4 H(+). The protein operates within sulfur metabolism; hydrogen sulfide biosynthesis; hydrogen sulfide from sulfite (NADPH route): step 1/1. Component of the sulfite reductase complex that catalyzes the 6-electron reduction of sulfite to sulfide. This is one of several activities required for the biosynthesis of L-cysteine from sulfate. This is Sulfite reductase [NADPH] hemoprotein beta-component from Vibrio parahaemolyticus serotype O3:K6 (strain RIMD 2210633).